The chain runs to 665 residues: UvrABC system protein B (665 aa).

The region spanning 25 to 412 (ASIEGGNRYQ…ENRIVEQVIR (388 aa)) is the Helicase ATP-binding domain. 38-45 (GATGTGKT) is a binding site for ATP. The Beta-hairpin signature appears at 91–114 (YYDYYQPEAYIPVTDTYIEKTAAI). The Helicase C-terminal domain occupies 429–583 (QIDDLLGEIK…VAYNKLHGIT (155 aa)). The UVR domain occupies 626-661 (PNLIDKLEAQMKEASKKLEFEEAAKLRDRIKQLRDK).

Belongs to the UvrB family. Forms a heterotetramer with UvrA during the search for lesions. Interacts with UvrC in an incision complex.

The protein resides in the cytoplasm. Functionally, the UvrABC repair system catalyzes the recognition and processing of DNA lesions. A damage recognition complex composed of 2 UvrA and 2 UvrB subunits scans DNA for abnormalities. Upon binding of the UvrA(2)B(2) complex to a putative damaged site, the DNA wraps around one UvrB monomer. DNA wrap is dependent on ATP binding by UvrB and probably causes local melting of the DNA helix, facilitating insertion of UvrB beta-hairpin between the DNA strands. Then UvrB probes one DNA strand for the presence of a lesion. If a lesion is found the UvrA subunits dissociate and the UvrB-DNA preincision complex is formed. This complex is subsequently bound by UvrC and the second UvrB is released. If no lesion is found, the DNA wraps around the other UvrB subunit that will check the other stand for damage. The protein is UvrABC system protein B of Nostoc sp. (strain PCC 7120 / SAG 25.82 / UTEX 2576).